Here is a 700-residue protein sequence, read N- to C-terminus: Autophagy-related protein 13 (700 aa).

The interval 319–352 (GSINSSSSPPPGATQSNQSVSSFSTSKPIPVTLN) is disordered. The span at 332-344 (TQSNQSVSSFSTS) shows a compositional bias: low complexity. The segment at 399–407 (SSFGSRFRT) is ATG17-binding. The ATG1-binding stretch occupies residues 428–487 (TPNNPILHNFRSRNKSPSVSSTELGPSSSIYMDDDLDSFMKMLDSKPDLRFPSNSPSVYE). The span at 506 to 532 (EQQQHGSPSSNQIMIHSQSQTSQSQVF) shows a compositional bias: polar residues. 3 disordered regions span residues 506–562 (EQQQ…PGVS), 576–637 (HASS…NPEL), and 649–700 (ESDD…NQEF). The segment covering 595 to 631 (SSPPASATAVATVHNSLRRLTSSSQRTNTNSTNSSTR) has biased composition (low complexity). Residues 656–667 (DEHSPRSTDTKS) are compositionally biased toward basic and acidic residues.

The protein belongs to the ATG13 family. Fungi subfamily. In terms of assembly, hypophosphorylated form interacts with ATG1 to form the ATG1-ATG13 kinase complex. The ATG1-ATG13 complex interacts with the ATG17-ATG29-ATG31 complex through direct interaction with ATG17. Interacts with VAC8.

The protein resides in the cytoplasm. The protein localises to the preautophagosomal structure. Activates the ATG1 kinase in a nutritional condition dependent manner through the TOR pathway, leading to autophagy. Involved in ATG9 and ATG23 cycling through the pre-autophagosomal structure. Also involved in cytoplasm to vacuole transport (Cvt) and more specifically in Cvt vesicle formation. Seems to play a role in the switching machinery regulating the conversion between the Cvt pathway and autophagy. Finally, ATG13 is also required for glycogen storage during stationary phase. In terms of biological role, acts as a negative regulator of xylose alcoholic fermentation, a role that is not related to autophagy. This Ogataea parapolymorpha (strain ATCC 26012 / BCRC 20466 / JCM 22074 / NRRL Y-7560 / DL-1) (Yeast) protein is Autophagy-related protein 13.